The sequence spans 355 residues: Uroporphyrinogen decarboxylase (355 aa).

Residues arginine 27–arginine 31, aspartate 78, tyrosine 155, serine 210, and histidine 328 each bind substrate.

This sequence belongs to the uroporphyrinogen decarboxylase family. Homodimer.

The protein resides in the cytoplasm. The enzyme catalyses uroporphyrinogen III + 4 H(+) = coproporphyrinogen III + 4 CO2. Its pathway is porphyrin-containing compound metabolism; protoporphyrin-IX biosynthesis; coproporphyrinogen-III from 5-aminolevulinate: step 4/4. Its function is as follows. Catalyzes the decarboxylation of four acetate groups of uroporphyrinogen-III to yield coproporphyrinogen-III. The protein is Uroporphyrinogen decarboxylase of Pseudomonas aeruginosa (strain UCBPP-PA14).